The chain runs to 426 residues: MLDLKRIRNNSNEIKEALNNRGEKFDVTVIDEVLKLDEERRNILVKVEVLKSKRNQVSSEVPKLKKEGKDVSNIVAEMKNLSEEIKGFDTTLAKIDEKIQYIMLRIPNIPNPQVPDGETDEDNIEIRNWSEPTKFDFEPKAHWDIGSNLNILDFERAGKVTGSRFTFYKGLGARLERSLISYFLDTHTEKHGYTEILPPYMVNRTSMIGTGQLPKFEEDAFKISEDDYFLIPTAEVPVTNLYRDEILKGDELPLKHVAYSACFRSEAGSAGRDTRGLVRQHQFNKVELVKFTKPEQSYEELEKLTNDAETVLKELGIPYRVVRICKGDLGFTAALKYDLEVWMPSYNRYVEISSCSNFEDFQARRANIRYKEDAKAKPQYVHTLNGSGVAIGRTVAAILENYQNEDGSVTIPEVLRPYMGGKEAIK.

Residue 233-235 participates in L-serine binding; the sequence is TAE. 264-266 contacts ATP; that stretch reads RSE. Glu-287 provides a ligand contact to L-serine. 351-354 serves as a coordination point for ATP; it reads EISS. L-serine is bound at residue Ser-387.

This sequence belongs to the class-II aminoacyl-tRNA synthetase family. Type-1 seryl-tRNA synthetase subfamily. As to quaternary structure, homodimer. The tRNA molecule binds across the dimer.

The protein localises to the cytoplasm. It carries out the reaction tRNA(Ser) + L-serine + ATP = L-seryl-tRNA(Ser) + AMP + diphosphate + H(+). The catalysed reaction is tRNA(Sec) + L-serine + ATP = L-seryl-tRNA(Sec) + AMP + diphosphate + H(+). It functions in the pathway aminoacyl-tRNA biosynthesis; selenocysteinyl-tRNA(Sec) biosynthesis; L-seryl-tRNA(Sec) from L-serine and tRNA(Sec): step 1/1. Its function is as follows. Catalyzes the attachment of serine to tRNA(Ser). Is also able to aminoacylate tRNA(Sec) with serine, to form the misacylated tRNA L-seryl-tRNA(Sec), which will be further converted into selenocysteinyl-tRNA(Sec). This Clostridium botulinum (strain Loch Maree / Type A3) protein is Serine--tRNA ligase.